Consider the following 137-residue polypeptide: Nucleoside diphosphate kinase (137 aa).

ATP-binding residues include lysine 9, phenylalanine 57, arginine 85, threonine 91, arginine 102, and asparagine 112. Histidine 115 (pros-phosphohistidine intermediate) is an active-site residue.

Belongs to the NDK family. In terms of assembly, homotetramer. Requires Mg(2+) as cofactor.

Its subcellular location is the cytoplasm. The catalysed reaction is a 2'-deoxyribonucleoside 5'-diphosphate + ATP = a 2'-deoxyribonucleoside 5'-triphosphate + ADP. It catalyses the reaction a ribonucleoside 5'-diphosphate + ATP = a ribonucleoside 5'-triphosphate + ADP. In terms of biological role, major role in the synthesis of nucleoside triphosphates other than ATP. The ATP gamma phosphate is transferred to the NDP beta phosphate via a ping-pong mechanism, using a phosphorylated active-site intermediate. This chain is Nucleoside diphosphate kinase, found in Campylobacter curvus (strain 525.92).